The following is a 666-amino-acid chain: Peptidase S41 family protein phomP1' (666 aa).

An N-terminal signal peptide occupies residues 1 to 27 (MSSFLVQTAVVRLFLLGVVFWFPFALS). N-linked (GlcNAc...) asparagine glycosylation is found at N70, N214, and N234. Residues 303–504 (DVAVLQITSF…LLQAQGVRTV (202 aa)) form a peptidase S41 domain region. Residues N555 and N612 are each glycosylated (N-linked (GlcNAc...) asparagine).

The protein belongs to the peptidase S41A family.

It functions in the pathway mycotoxin biosynthesis. Its function is as follows. Peptidase S41 family protein; part of the gene cluster that mediates the biosynthesis of the phomopsins, a group of hexapeptide mycotoxins which infects lupins and causes lupinosis disease in livestock. Within the pathway, phomP1 and phomP1' are probably involved in the processing of the phomA and phomA' precursors. The pathway starts with the processing of the precursor phomA by several endopeptidases including kexin proteases as well as the cluster-specific S41 family peptidase phomP1 and the oligopeptidase phomG to produce 10 identical copies of the hexapeptide Tyr-Val-Ile-Pro-Ile-Asp. After being excised from the precursor peptide, the core peptides are cyclized and modified post-translationally by enzymes encoded within the gene cluster. The timing and order of proteolysis of the phomA precursor and PTMs are still unknown. Two tyrosinase-like enzymes, phomQ1 and phomQ2, catalyze the chlorination and hydroxylation of Tyr, respectively. PhomYb, is proposed to be involved in the construction of the macrocyclic structure. The other 4 ustYa family proteins may be involved in PTMs that generate the unique structure of phomopsin A. PhomYa is required for the hydroxylation of C-beta of Tyr. PhomYc, phomYd, and phomYe are responsible for the biosynthesis of 2,3-dehydroisoleucine (dIle), 2,3-dehydroaspartic acid (dAsp), and 3,4-dehydroproline (dPro), respectively. While dIle formation by phomYc is indispensable for the installation of dAsp by phomYd, the order of the other PTMs have not been elucidated yet. Most of the biosynthetic enzymes likely have broad substrate specificity, and thus, there might be a metabolic grid from a precursor to phomopsin A. The enzyme(s) responsible for the biosynthesis of 3,4-dehydrovaline (dVal) have also not been identified yet. Finally, phomM acts as an S-adenosylmethionine-dependent alpha-N-methyltransferase that catalyzes two successive N-methylation reactions, converting N-desmethyl-phomopsin A to phomopsin A and phomopsin A further to an N,N-dimethylated congener called phomopsin E. The sequence is that of Peptidase S41 family protein phomP1' from Diaporthe leptostromiformis (Lupinosis disease fungus).